Here is a 469-residue protein sequence, read N- to C-terminus: E3 ubiquitin-protein ligase TRAIP (469 aa).

Residues 7–50 form an RING-type zinc finger; the sequence is CTICSDFFDHSRDVAAIHCGHTFHLQCLIQWFETAPSRTCPQCR. Coiled coils occupy residues 70-177 and 201-280; these read EENV…QSQR and CVSL…TLNL. Residues 211–469 form an interaction with CYLD region; sequence LKEARKASGE…QAKLDTFLWS (259 aa). Residue lysine 304 forms a Glycyl lysine isopeptide (Lys-Gly) (interchain with G-Cter in SUMO2) linkage. The short motif at 460 to 469 is the PIP-box element; the sequence is QAKLDTFLWS.

This sequence belongs to the TRAIP family. In terms of assembly, interacts (via PIP-box) with PCNA. Binds TRAF1, TRAF2, TRAF3, TRAF5 and TRAF6 is part of the receptor-TRAF signaling complex. May interact with CYLD; the C-terminus interacts with CYLD, however the interaction was not detected with the full-length protein. Interacts with POLK and POLN. Interacts with UIMC1. Post-translationally, sumoylated; sumoylation is required for nuclear localization. Sumoylation increases protein stability, possibly by preventing ubiquitination. In terms of processing, autoubiquitinated.

The protein localises to the nucleus. The protein resides in the nucleoplasm. It is found in the nucleolus. Its subcellular location is the chromosome. It localises to the cytoplasm. The protein localises to the perinuclear region. It carries out the reaction S-ubiquitinyl-[E2 ubiquitin-conjugating enzyme]-L-cysteine + [acceptor protein]-L-lysine = [E2 ubiquitin-conjugating enzyme]-L-cysteine + N(6)-ubiquitinyl-[acceptor protein]-L-lysine.. It functions in the pathway protein modification; protein ubiquitination. Its function is as follows. E3 ubiquitin ligase required to protect genome stability in response to replication stress. Acts as a key regulator of interstrand cross-link repair, which takes place when both strands of duplex DNA are covalently tethered together, thereby blocking replication and transcription. Controls the choice between the two pathways of replication-coupled interstrand-cross-link repair by mediating ubiquitination of MCM7 subunit of the CMG helicase complex. Short ubiquitin chains on MCM7 promote recruitment of DNA glycosylase NEIL3. If the interstrand cross-link cannot be cleaved by NEIL3, the ubiquitin chains continue to grow on MCM7, promoting the unloading of the CMG helicase complex by the VCP/p97 ATPase, enabling the Fanconi anemia DNA repair pathway. Only catalyzes ubiquitination of MCM7 when forks converge. Also involved in the repair of covalent DNA-protein cross-links (DPCs) during DNA synthesis: promotes ubiquitination of DPCs, leading to their degradation by the proteasome. Has also been proposed to play a role in promoting translesion synthesis by mediating the assembly of 'Lys-63'-linked poly-ubiquitin chains on the Y-family polymerase POLN in order to facilitate bypass of DNA lesions and preserve genomic integrity. The function in translesion synthesis is however controversial. Acts as a regulator of the spindle assembly checkpoint. Also acts as a negative regulator of innate immune signaling by inhibiting activation of NF-kappa-B mediated by TNF. Negatively regulates TLR3/4- and RIG-I-mediated IRF3 activation and subsequent IFNB1 production and cellular antiviral response by promoting 'Lys-48'-linked polyubiquitination of TNK1 leading to its proteasomal degradation. The polypeptide is E3 ubiquitin-protein ligase TRAIP (Homo sapiens (Human)).